Here is a 163-residue protein sequence, read N- to C-terminus: Thiol peroxidase (163 aa).

The Thioredoxin domain occupies 16-162 (LQVGDTAHDF…YDAAIAAVKS (147 aa)). The active-site Cysteine sulfenic acid (-SOH) intermediate is Cys-58. Cys-58 and Cys-92 are joined by a disulfide.

It belongs to the peroxiredoxin family. Tpx subfamily. As to quaternary structure, homodimer.

The enzyme catalyses a hydroperoxide + [thioredoxin]-dithiol = an alcohol + [thioredoxin]-disulfide + H2O. In terms of biological role, thiol-specific peroxidase that catalyzes the reduction of hydrogen peroxide and organic hydroperoxides to water and alcohols, respectively. Plays a role in cell protection against oxidative stress by detoxifying peroxides. This chain is Thiol peroxidase, found in Streptococcus sanguinis.